Reading from the N-terminus, the 358-residue chain is Alanine racemase (358 aa).

The active-site Proton acceptor; specific for D-alanine is Lys-35. Lys-35 carries the post-translational modification N6-(pyridoxal phosphate)lysine. Arg-130 contacts substrate. Tyr-255 serves as the catalytic Proton acceptor; specific for L-alanine. Met-303 is a substrate binding site.

The protein belongs to the alanine racemase family. Requires pyridoxal 5'-phosphate as cofactor.

It catalyses the reaction L-alanine = D-alanine. It participates in amino-acid biosynthesis; D-alanine biosynthesis; D-alanine from L-alanine: step 1/1. Functionally, catalyzes the interconversion of L-alanine and D-alanine. May also act on other amino acids. The sequence is that of Alanine racemase (alr) from Shewanella putrefaciens (strain CN-32 / ATCC BAA-453).